The following is a 332-amino-acid chain: Protein EXORDIUM-like 6 (332 aa).

The N-terminal stretch at 1 to 27 (MAMASASSSSSSISVIIFLLLAPLCLS) is a signal peptide. N-linked (GlcNAc...) asparagine glycosylation is found at N36, N102, and N143.

It belongs to the EXORDIUM family.

The protein resides in the secreted. It localises to the extracellular space. It is found in the apoplast. In terms of biological role, may play a role in a brassinosteroid-dependent regulation of growth and development. In Arabidopsis thaliana (Mouse-ear cress), this protein is Protein EXORDIUM-like 6 (EXL6).